The sequence spans 101 residues: A-type ATP synthase subunit F (101 aa).

Belongs to the V-ATPase F subunit family. Has multiple subunits with at least A(3), B(3), C, D, E, F, H, I and proteolipid K(x).

The protein resides in the cell membrane. In terms of biological role, component of the A-type ATP synthase that produces ATP from ADP in the presence of a proton gradient across the membrane. In Archaeoglobus fulgidus (strain ATCC 49558 / DSM 4304 / JCM 9628 / NBRC 100126 / VC-16), this protein is A-type ATP synthase subunit F.